Here is a 183-residue protein sequence, read N- to C-terminus: Adenine phosphoribosyltransferase (183 aa).

Belongs to the purine/pyrimidine phosphoribosyltransferase family. Homodimer.

The protein resides in the cytoplasm. The catalysed reaction is AMP + diphosphate = 5-phospho-alpha-D-ribose 1-diphosphate + adenine. It participates in purine metabolism; AMP biosynthesis via salvage pathway; AMP from adenine: step 1/1. Catalyzes a salvage reaction resulting in the formation of AMP, that is energically less costly than de novo synthesis. This chain is Adenine phosphoribosyltransferase, found in Shewanella sp. (strain ANA-3).